The following is a 284-amino-acid chain: 2-dehydro-3-deoxyphosphooctonate aldolase (284 aa).

It belongs to the KdsA family.

Its subcellular location is the cytoplasm. It catalyses the reaction D-arabinose 5-phosphate + phosphoenolpyruvate + H2O = 3-deoxy-alpha-D-manno-2-octulosonate-8-phosphate + phosphate. It participates in carbohydrate biosynthesis; 3-deoxy-D-manno-octulosonate biosynthesis; 3-deoxy-D-manno-octulosonate from D-ribulose 5-phosphate: step 2/3. The protein operates within bacterial outer membrane biogenesis; lipopolysaccharide biosynthesis. The sequence is that of 2-dehydro-3-deoxyphosphooctonate aldolase from Paraburkholderia xenovorans (strain LB400).